A 617-amino-acid chain; its full sequence is V-type proton ATPase catalytic subunit A (617 aa).

Position 2 is an N-acetylalanine (Asp2). Phosphothreonine is present on Thr136. Residue 250-257 (GAFGCGKT) coordinates ATP. Position 384 is a phosphoserine; by AMPK (Ser384).

This sequence belongs to the ATPase alpha/beta chains family. As to quaternary structure, V-ATPase is a heteromultimeric enzyme made up of two complexes: the ATP-hydrolytic V1 complex and the proton translocation V0 complex. The V1 complex consists of three catalytic AB heterodimers that form a heterohexamer, three peripheral stalks each consisting of EG heterodimers, one central rotor including subunits D and F, and the regulatory subunits C and H. The proton translocation complex V0 consists of the proton transport subunit a, a ring of proteolipid subunits c9c'', rotary subunit d, subunits e and f, and the accessory subunits ATP6AP1/Ac45 and ATP6AP2/PRR. Interacts with the V0 complex V-ATPase subunit a4 ATP6V0A4. Interacts with WFS1. Interacts with alpha-crystallin B chain/CRYAB and with MTOR, forming a ternary complex. In terms of assembly, (Microbial infection) Interacts with Rabies virus protein M; this interaction promotes virion uncoating. In terms of processing, phosphorylation at Ser-384 by AMPK down-regulates its enzyme activity. In terms of tissue distribution, high expression in the skin.

Its subcellular location is the cytoplasm. The protein localises to the cytosol. The protein resides in the cytoplasmic vesicle. It is found in the secretory vesicle. It localises to the clathrin-coated vesicle membrane. Its subcellular location is the lysosome. It catalyses the reaction ATP + H2O + 4 H(+)(in) = ADP + phosphate + 5 H(+)(out). ATP hydrolysis occurs at the interface between the nucleotide-binding domains of subunits A and B. ATP hydrolysis triggers a conformational change in the subunits D and F, which induces a shift of subunit d. The c-ring is subsequently rotated and results in a continuous proton translocation across the membrane. In terms of biological role, catalytic subunit of the V1 complex of vacuolar(H+)-ATPase (V-ATPase), a multisubunit enzyme composed of a peripheral complex (V1) that hydrolyzes ATP and a membrane integral complex (V0) that translocates protons. V-ATPase is responsible for acidifying and maintaining the pH of intracellular compartments and in some cell types, is targeted to the plasma membrane, where it is responsible for acidifying the extracellular environment. In aerobic conditions, involved in intracellular iron homeostasis, thus triggering the activity of Fe(2+) prolyl hydroxylase (PHD) enzymes, and leading to HIF1A hydroxylation and subsequent proteasomal degradation. May play a role in neurite development and synaptic connectivity. Functionally, (Microbial infection) Plays an important role in virion uncoating during Rabies virus replication after membrane fusion. Specifically, participates in the dissociation of incoming viral matrix M proteins uncoating through direct interaction. The protein is V-type proton ATPase catalytic subunit A (ATP6V1A) of Homo sapiens (Human).